Consider the following 1755-residue polypeptide: Transposon Ty1-PL Gag-Pol polyprotein (1755 aa).

Polar residues-rich tracts occupy residues Met1 to Ser23, Thr48 to Ser60, and Gln127 to Phe152. 3 disordered regions span residues Met1–Gln93, Pro126–Met174, and Gly352–Thr421. Residues Thr153–Thr165 show a composition bias toward low complexity. The tract at residues Asn299 to His401 is RNA-binding. Low complexity predominate over residues Asn402 to Ser418. Ser416 is subject to Phosphoserine. Asp461 serves as the catalytic For protease activity; shared with dimeric partner. The integrase-type zinc finger-like stretch occupies residues Asn583–Cys640. The 176-residue stretch at Asn660 to Pro835 folds into the Integrase catalytic domain. Mg(2+) contacts are provided by Asp671 and Asp736. Disordered regions lie at residues Ser956 to Lys1087, Arg1092 to Pro1111, and Asp1130 to Thr1187. The segment covering Ser960–Thr969 has biased composition (low complexity). The span at Ser1005 to Thr1015 shows a compositional bias: polar residues. The segment covering Glu1038–Ser1053 has biased composition (basic and acidic residues). 2 stretches are compositionally biased toward polar residues: residues Tyr1054–Asp1082 and Pro1101–Pro1111. The Bipartite nuclear localization signal signature appears at Lys1178 to Arg1212. The Reverse transcriptase Ty1/copia-type domain maps to Asn1338–Gln1476. 6 residues coordinate Mg(2+): Asp1346, Asp1427, Asp1428, Asp1610, Glu1652, and Asp1685. Residues Asp1610–Lys1752 enclose the RNase H Ty1/copia-type domain.

The capsid protein forms a homotrimer, from which the VLPs are assembled. The protease is a homodimer, whose active site consists of two apposed aspartic acid residues. Initially, virus-like particles (VLPs) are composed of the structural unprocessed proteins Gag and Gag-Pol, and also contain the host initiator methionine tRNA (tRNA(i)-Met) which serves as a primer for minus-strand DNA synthesis, and a dimer of genomic Ty RNA. Processing of the polyproteins occurs within the particle and proceeds by an ordered pathway, called maturation. First, the protease (PR) is released by autocatalytic cleavage of the Gag-Pol polyprotein yielding capsid protein p45 and a Pol-p154 precursor protein. This cleavage is a prerequisite for subsequent processing of Pol-p154 at the remaining sites to release the mature structural and catalytic proteins. Maturation takes place prior to the RT reaction and is required to produce transposition-competent VLPs.

The protein resides in the cytoplasm. It localises to the nucleus. The catalysed reaction is DNA(n) + a 2'-deoxyribonucleoside 5'-triphosphate = DNA(n+1) + diphosphate. The enzyme catalyses Endonucleolytic cleavage to 5'-phosphomonoester.. Capsid protein (CA) is the structural component of the virus-like particle (VLP), forming the shell that encapsulates the retrotransposons dimeric RNA genome. The particles are assembled from trimer-clustered units and there are holes in the capsid shells that allow for the diffusion of macromolecules. CA also has nucleocapsid-like chaperone activity, promoting primer tRNA(i)-Met annealing to the multipartite primer-binding site (PBS), dimerization of Ty1 RNA and initiation of reverse transcription. Functionally, the aspartyl protease (PR) mediates the proteolytic cleavages of the Gag and Gag-Pol polyproteins after assembly of the VLP. Its function is as follows. Reverse transcriptase/ribonuclease H (RT) is a multifunctional enzyme that catalyzes the conversion of the retro-elements RNA genome into dsDNA within the VLP. The enzyme displays a DNA polymerase activity that can copy either DNA or RNA templates, and a ribonuclease H (RNase H) activity that cleaves the RNA strand of RNA-DNA heteroduplexes during plus-strand synthesis and hydrolyzes RNA primers. The conversion leads to a linear dsDNA copy of the retrotransposon that includes long terminal repeats (LTRs) at both ends. In terms of biological role, integrase (IN) targets the VLP to the nucleus, where a subparticle preintegration complex (PIC) containing at least integrase and the newly synthesized dsDNA copy of the retrotransposon must transit the nuclear membrane. Once in the nucleus, integrase performs the integration of the dsDNA into the host genome. The protein is Transposon Ty1-PL Gag-Pol polyprotein (TY1B-PL) of Saccharomyces cerevisiae (strain ATCC 204508 / S288c) (Baker's yeast).